We begin with the raw amino-acid sequence, 218 residues long: Hypoxanthine-guanine phosphoribosyltransferase (218 aa).

Ala2 carries the post-translational modification N-acetylalanine. Lys69 serves as a coordination point for GMP. Lys103 carries the post-translational modification N6-acetyllysine. Lys115 participates in a covalent cross-link: Glycyl lysine isopeptide (Lys-Gly) (interchain with G-Cter in SUMO1); alternate. A Glycyl lysine isopeptide (Lys-Gly) (interchain with G-Cter in SUMO2); alternate cross-link involves residue Lys115. GMP contacts are provided by residues 134–142, Lys166, 186–188, and Asp194; these read EDIIDTGKT and KFV. Catalysis depends on Asp138, which acts as the Proton acceptor. Thr142 is subject to Phosphothreonine. Residue Asp194 coordinates Mg(2+).

This sequence belongs to the purine/pyrimidine phosphoribosyltransferase family. In terms of assembly, homotetramer. Mg(2+) serves as cofactor.

The protein resides in the cytoplasm. It carries out the reaction IMP + diphosphate = hypoxanthine + 5-phospho-alpha-D-ribose 1-diphosphate. It catalyses the reaction GMP + diphosphate = guanine + 5-phospho-alpha-D-ribose 1-diphosphate. The protein operates within purine metabolism; IMP biosynthesis via salvage pathway; IMP from hypoxanthine: step 1/1. Functionally, converts guanine to guanosine monophosphate, and hypoxanthine to inosine monophosphate. Transfers the 5-phosphoribosyl group from 5-phosphoribosylpyrophosphate onto the purine. Plays a central role in the generation of purine nucleotides through the purine salvage pathway. The chain is Hypoxanthine-guanine phosphoribosyltransferase (HPRT1) from Canis lupus familiaris (Dog).